The primary structure comprises 232 residues: Adenosylcobinamide-GDP ribazoletransferase (232 aa).

The next 6 membrane-spanning stretches (helical) occupy residues 31–51, 59–79, 102–122, 126–146, 167–187, and 209–229; these read LPSF…LGAL, VFFL…GFLD, VGPF…NLYL, PFYF…LMAF, LLIS…YIIS, and VTGD…LLIL.

This sequence belongs to the CobS family. Mg(2+) is required as a cofactor.

The protein resides in the cell inner membrane. The catalysed reaction is alpha-ribazole + adenosylcob(III)inamide-GDP = adenosylcob(III)alamin + GMP + H(+). The enzyme catalyses alpha-ribazole 5'-phosphate + adenosylcob(III)inamide-GDP = adenosylcob(III)alamin 5'-phosphate + GMP + H(+). The protein operates within cofactor biosynthesis; adenosylcobalamin biosynthesis; adenosylcobalamin from cob(II)yrinate a,c-diamide: step 7/7. In terms of biological role, joins adenosylcobinamide-GDP and alpha-ribazole to generate adenosylcobalamin (Ado-cobalamin). Also synthesizes adenosylcobalamin 5'-phosphate from adenosylcobinamide-GDP and alpha-ribazole 5'-phosphate. This chain is Adenosylcobinamide-GDP ribazoletransferase, found in Thermosipho africanus (strain TCF52B).